We begin with the raw amino-acid sequence, 676 residues long: Pescadillo homolog (676 aa).

Positions 298–327 (IAAMADDEDEQEVEMAEADAEDDDEEENTE) form a coiled coil. 4 disordered regions span residues 298 to 338 (IAAM…TAPD), 413 to 439 (PLAN…STKP), 478 to 502 (VKPK…EAEA), and 515 to 676 (EVDD…AERA). Residues 302–327 (ADDEDEQEVEMAEADAEDDDEEENTE) show a composition bias toward acidic residues. Positions 351-466 (EIASLFAPFT…KLLRPDLYAP (116 aa)) constitute a BRCT domain. Residues 415-427 (ANGASAAGAEDAA) are compositionally biased toward low complexity. 3 stretches are compositionally biased toward acidic residues: residues 515–524 (EVDDDEDMDA), 539–557 (DVAD…DAEG), and 565–577 (FDDE…DISE). Residues 568–676 (ESEAESDISE…EKAKAAAERA (109 aa)) are a coiled coil. Basic and acidic residues-rich tracts occupy residues 579–608 (EAAR…KKEQ), 620–631 (KRAEEEERDRQK), 643–659 (KRIE…SENL), and 666–676 (LEKAKAAAERA).

Belongs to the pescadillo family. As to quaternary structure, component of the NOP7 complex, composed of ERB1, NOP7 and YTM1. The complex is held together by ERB1, which interacts with NOP7 via its N-terminal domain and with YTM1 via a high-affinity interaction between the seven-bladed beta-propeller domains of the 2 proteins. The NOP7 complex associates with the 66S pre-ribosome.

The protein resides in the nucleus. Its subcellular location is the nucleolus. The protein localises to the nucleoplasm. In terms of biological role, component of the NOP7 complex, which is required for maturation of the 25S and 5.8S ribosomal RNAs and formation of the 60S ribosome. The chain is Pescadillo homolog from Phaeosphaeria nodorum (strain SN15 / ATCC MYA-4574 / FGSC 10173) (Glume blotch fungus).